The sequence spans 326 residues: Phosphate acyltransferase (326 aa).

It belongs to the PlsX family. Homodimer. Probably interacts with PlsY.

The protein resides in the cytoplasm. The catalysed reaction is a fatty acyl-[ACP] + phosphate = an acyl phosphate + holo-[ACP]. Its pathway is lipid metabolism; phospholipid metabolism. Catalyzes the reversible formation of acyl-phosphate (acyl-PO(4)) from acyl-[acyl-carrier-protein] (acyl-ACP). This enzyme utilizes acyl-ACP as fatty acyl donor, but not acyl-CoA. The polypeptide is Phosphate acyltransferase (Thermus thermophilus (strain ATCC BAA-163 / DSM 7039 / HB27)).